A 482-amino-acid polypeptide reads, in one-letter code: G patch domain-containing protein 2-like (482 aa).

3 positions are modified to phosphoserine: serine 31, serine 86, and serine 88. At threonine 91 the chain carries Phosphothreonine. Lysine 196 is covalently cross-linked (Glycyl lysine isopeptide (Lys-Gly) (interchain with G-Cter in SUMO2)). Residues glycine 198 to serine 214 are compositionally biased toward basic and acidic residues. 2 disordered regions span residues glycine 198–glutamine 247 and lysine 413–serine 482. A compositionally biased stretch (low complexity) spans glutamate 220 to serine 230. Residues threonine 439 to serine 450 are compositionally biased toward polar residues. Serine 447 and serine 449 each carry phosphoserine. Residues threonine 456–threonine 469 are compositionally biased toward low complexity.

The protein is G patch domain-containing protein 2-like (GPATCH2L) of Homo sapiens (Human).